Reading from the N-terminus, the 531-residue chain is MELRSELPSVPGAATAAATATGPPVASVASVAAAAAAAASLPVSVAGGLLRAPPLLLRAAEKYPRTPKCARCRNHGVVSALKGHKRYCRWKDCLCAKCTLIAERQRVMAAQVALRRQQAQEENEARELQLLYGTAEGLALAAANGIIPPRPAYEVFGSVCATDGGGPGAGAPAGSAGGAGGAEAKLQKFDLFPKTLLQAGRPDSPQPPPGKPLSPDGADSGPRTSSPEVRPGSGSENGDGESFSGSPLARASKEAGGSCPGSAGAGGGGEEDSPGSSSPLGSESGSEADKEEAEAAPTPGLGGGPGPRQRTPLDILTRVFPGHRRGVLELVLQGCGGDVVQAIEQVLNHHRGGLAAGLGPAAPLEKAAVSAAVEDAWPGRVEAAAAGGAGLPAPLQTGPTAPPHHRPLLAGAMTPGALGSLSSRSAFSPLQPNASHFGADAGAYPLGAPLGLSPLRLAYSAAAAHSRGLAFMAPYSTAGLVPTLGFRPPMDYAFSDLMRDRSAAAAAAVHKEPGYGGGLYGPMVNGTPEKQ.

Residues 69–116 constitute a DNA-binding region (DM); the sequence is CARCRNHGVVSALKGHKRYCRWKDCLCAKCTLIAERQRVMAAQVALRR. Residues 197–312 form a disordered region; it reads LQAGRPDSPQ…GGPGPRQRTP (116 aa). The span at 274–285 shows a compositional bias: low complexity; that stretch reads PGSSSPLGSESG. The region spanning 310–345 is the DMA domain; it reads RTPLDILTRVFPGHRRGVLELVLQGCGGDVVQAIEQ.

It belongs to the DMRT family. As to expression, expressed in adult brain and testis, as well as in embryonic ovary, kidney, heart, lung, stomach and brain.

The protein resides in the nucleus. May be involved in sexual development. In Mus musculus (Mouse), this protein is Doublesex- and mab-3-related transcription factor A2 (Dmrta2).